Consider the following 354-residue polypeptide: Serine/threonine-protein kinase ppk34 (354 aa).

The 292-residue stretch at 40–331 (YRLKNMLGYG…IEELLRDPFL (292 aa)) folds into the Protein kinase domain. Residues 46-54 (LGYGACSTV) and Lys69 each bind ATP. The active-site Proton acceptor is the Asp200.

It belongs to the protein kinase superfamily. Ser/Thr protein kinase family.

The protein localises to the cytoplasm. Its subcellular location is the nucleus. The enzyme catalyses L-seryl-[protein] + ATP = O-phospho-L-seryl-[protein] + ADP + H(+). It catalyses the reaction L-threonyl-[protein] + ATP = O-phospho-L-threonyl-[protein] + ADP + H(+). The polypeptide is Serine/threonine-protein kinase ppk34 (ppk34) (Schizosaccharomyces pombe (strain 972 / ATCC 24843) (Fission yeast)).